The sequence spans 291 residues: Nitrogenase iron protein 1 (291 aa).

An ATP-binding site is contributed by G10–S17. A [4Fe-4S] cluster-binding site is contributed by C98. R101 is modified (ADP-ribosylarginine; by dinitrogenase reductase ADP-ribosyltransferase). [4Fe-4S] cluster is bound at residue C133.

This sequence belongs to the NifH/BchL/ChlL family. Homodimer. The cofactor is [4Fe-4S] cluster. Post-translationally, the reversible ADP-ribosylation of Arg-101 inactivates the nitrogenase reductase and regulates nitrogenase activity.

It catalyses the reaction N2 + 8 reduced [2Fe-2S]-[ferredoxin] + 16 ATP + 16 H2O = H2 + 8 oxidized [2Fe-2S]-[ferredoxin] + 2 NH4(+) + 16 ADP + 16 phosphate + 6 H(+). Its function is as follows. The key enzymatic reactions in nitrogen fixation are catalyzed by the nitrogenase complex, which has 2 components: the iron protein (component 2) and a component 1 which is either a molybdenum-iron protein, a vanadium-iron, or an iron-iron protein. This Azotobacter chroococcum mcd 1 protein is Nitrogenase iron protein 1 (nifH1).